A 344-amino-acid polypeptide reads, in one-letter code: Phenylalanine--tRNA ligase alpha subunit (344 aa).

Glu-255 serves as a coordination point for Mg(2+).

Belongs to the class-II aminoacyl-tRNA synthetase family. Phe-tRNA synthetase alpha subunit type 1 subfamily. Tetramer of two alpha and two beta subunits. Requires Mg(2+) as cofactor.

It is found in the cytoplasm. The catalysed reaction is tRNA(Phe) + L-phenylalanine + ATP = L-phenylalanyl-tRNA(Phe) + AMP + diphosphate + H(+). The sequence is that of Phenylalanine--tRNA ligase alpha subunit from Cytophaga hutchinsonii (strain ATCC 33406 / DSM 1761 / CIP 103989 / NBRC 15051 / NCIMB 9469 / D465).